Here is a 286-residue protein sequence, read N- to C-terminus: 2,3,4,5-tetrahydropyridine-2,6-dicarboxylate N-succinyltransferase (286 aa).

Residues Arg109 and Asp146 each coordinate substrate.

Belongs to the transferase hexapeptide repeat family. As to quaternary structure, homotrimer.

The protein resides in the cytoplasm. It carries out the reaction (S)-2,3,4,5-tetrahydrodipicolinate + succinyl-CoA + H2O = (S)-2-succinylamino-6-oxoheptanedioate + CoA. It participates in amino-acid biosynthesis; L-lysine biosynthesis via DAP pathway; LL-2,6-diaminopimelate from (S)-tetrahydrodipicolinate (succinylase route): step 1/3. The chain is 2,3,4,5-tetrahydropyridine-2,6-dicarboxylate N-succinyltransferase from Bartonella tribocorum (strain CIP 105476 / IBS 506).